Consider the following 354-residue polypeptide: Glycerol-3-phosphate dehydrogenase [NAD(P)+] (354 aa).

Positions 27, 28, 48, and 121 each coordinate NADPH. Residues K121 and G149 each contribute to the sn-glycerol 3-phosphate site. A153 provides a ligand contact to NADPH. 5 residues coordinate sn-glycerol 3-phosphate: K204, D257, S267, R268, and N269. The Proton acceptor role is filled by K204. R268 contributes to the NADPH binding site. 2 residues coordinate NADPH: V292 and E294.

This sequence belongs to the NAD-dependent glycerol-3-phosphate dehydrogenase family.

The protein localises to the cytoplasm. The catalysed reaction is sn-glycerol 3-phosphate + NAD(+) = dihydroxyacetone phosphate + NADH + H(+). The enzyme catalyses sn-glycerol 3-phosphate + NADP(+) = dihydroxyacetone phosphate + NADPH + H(+). It participates in membrane lipid metabolism; glycerophospholipid metabolism. In terms of biological role, catalyzes the reduction of the glycolytic intermediate dihydroxyacetone phosphate (DHAP) to sn-glycerol 3-phosphate (G3P), the key precursor for phospholipid synthesis. The chain is Glycerol-3-phosphate dehydrogenase [NAD(P)+] from Pseudomonas fluorescens (strain Pf0-1).